We begin with the raw amino-acid sequence, 73 residues long: UPF0154 protein BcerKBAB4_3367 (73 aa).

The chain crosses the membrane as a helical span at residues 4–24 (WLGILVGVVALVAGVALGFFI).

It belongs to the UPF0154 family.

The protein localises to the cell membrane. The chain is UPF0154 protein BcerKBAB4_3367 from Bacillus mycoides (strain KBAB4) (Bacillus weihenstephanensis).